The following is a 121-amino-acid chain: Heme-degrading monooxygenase (121 aa).

Residues 2-101 form the ABM domain; the sequence is IIVTNTIKVE…EQREDRKGIV (100 aa). N6 is a Fe cation binding site. Positions 76–98 are disordered; that stretch reads KSDSFKKAHGRTKDTREQREDRK. Residues 78 to 98 show a composition bias toward basic and acidic residues; it reads DSFKKAHGRTKDTREQREDRK. H84 contacts heme.

The protein belongs to the antibiotic biosynthesis monooxygenase family. Heme-degrading monooxygenase IsdG subfamily. Homodimer.

The protein localises to the cytoplasm. The enzyme catalyses heme b + 3 reduced [NADPH--hemoprotein reductase] + 3 O2 = biliverdin IXalpha + CO + Fe(2+) + 3 oxidized [NADPH--hemoprotein reductase] + 3 H2O + H(+). Its function is as follows. Allows bacterial pathogens to use the host heme as an iron source. Catalyzes the oxidative degradation of the heme macrocyclic porphyrin ring to the biliverdin in the presence of a suitable electron donor such as ascorbate or NADPH--cytochrome P450 reductase, with subsequent release of free iron. In Listeria welshimeri serovar 6b (strain ATCC 35897 / DSM 20650 / CCUG 15529 / CIP 8149 / NCTC 11857 / SLCC 5334 / V8), this protein is Heme-degrading monooxygenase.